Here is a 99-residue protein sequence, read N- to C-terminus: MAESKGRPGSASQRPTGGDKAIAGQKKQYFRRKKVCRFCVEKIDDINYKDVKMLHAFVAERGKIVPRRISGVCAPHQRRLTDAIKKARNIALLPFAASF.

The disordered stretch occupies residues 1-25 (MAESKGRPGSASQRPTGGDKAIAGQ).

It belongs to the bacterial ribosomal protein bS18 family. In terms of assembly, part of the 30S ribosomal subunit. Forms a tight heterodimer with protein bS6.

Functionally, binds as a heterodimer with protein bS6 to the central domain of the 16S rRNA, where it helps stabilize the platform of the 30S subunit. The protein is Small ribosomal subunit protein bS18 of Solibacter usitatus (strain Ellin6076).